The primary structure comprises 152 residues: Proline-rich acidic protein 1 (152 aa).

A signal peptide spans 1–20 (MKRFLLATCLVAVLLWEAGA).

As to quaternary structure, interacts with MTTP. Interacts with MAD1L1. In terms of tissue distribution, highly expressed in the small intestine where it shows a proximal-distal graded expression.

The protein resides in the secreted. It is found in the endoplasmic reticulum. Functionally, lipid-binding protein which promotes lipid absorption by facilitating MTTP-mediated lipid transfer (mainly triglycerides and phospholipids) and MTTP-mediated apoB lipoprotein assembly and secretion. Protects the gastrointestinal epithelium from irradiation-induced apoptosis. May play an important role in maintaining normal growth homeostasis in epithelial cells. Involved in p53/TP53-dependent cell survival after DNA damage. This Rattus norvegicus (Rat) protein is Proline-rich acidic protein 1 (Prap1).